The sequence spans 164 residues: Cyclic pyranopterin monophosphate synthase (164 aa).

Residues 77–79 (LCH) and 115–116 (ME) each bind substrate. Aspartate 130 is a catalytic residue.

Belongs to the MoaC family. In terms of assembly, homohexamer; trimer of dimers.

The enzyme catalyses (8S)-3',8-cyclo-7,8-dihydroguanosine 5'-triphosphate = cyclic pyranopterin phosphate + diphosphate. It functions in the pathway cofactor biosynthesis; molybdopterin biosynthesis. Catalyzes the conversion of (8S)-3',8-cyclo-7,8-dihydroguanosine 5'-triphosphate to cyclic pyranopterin monophosphate (cPMP). The polypeptide is Cyclic pyranopterin monophosphate synthase (Rhizobium meliloti (strain 1021) (Ensifer meliloti)).